A 279-amino-acid chain; its full sequence is BEN domain-containing protein 6 (279 aa).

Residues 1-15 show a composition bias toward polar residues; it reads MQKIVQTDEITNTQA. 2 disordered regions span residues 1 to 65 and 134 to 172; these read MQKI…LAEL and RATNNSSPDSFASTCSNSNSNSSSPVSLKPEEEHQTDEK. A coiled-coil region spans residues 62–99; that stretch reads LAELSKEELCAKIKSLKEKLTNTRKENSRLRQSLVMLQ. The span at 134–148 shows a compositional bias: polar residues; that stretch reads RATNNSSPDSFASTC. The span at 162-172 shows a compositional bias: basic and acidic residues; it reads KPEEEHQTDEK. The region spanning 171-271 is the BEN domain; it reads EKQFQIEKWQ…NCTKKPNLSK (101 aa).

In terms of assembly, interacts (via BEN domain) with RBPJ.

It is found in the nucleus. Functionally, acts as a corepressor of recombining binding protein suppressor hairless (RBPJ) and inhibits Notch signaling in neural stem cells, thereby opposing their self-renewal and promoting neurogenesis. This Homo sapiens (Human) protein is BEN domain-containing protein 6 (BEND6).